The chain runs to 417 residues: Serine hydroxymethyltransferase (417 aa).

(6S)-5,6,7,8-tetrahydrofolate contacts are provided by residues L121 and 125-127 (GHL). The residue at position 229 (K229) is an N6-(pyridoxal phosphate)lysine. (6S)-5,6,7,8-tetrahydrofolate is bound at residue 355–357 (SPF).

Belongs to the SHMT family. Homodimer. It depends on pyridoxal 5'-phosphate as a cofactor.

It localises to the cytoplasm. The enzyme catalyses (6R)-5,10-methylene-5,6,7,8-tetrahydrofolate + glycine + H2O = (6S)-5,6,7,8-tetrahydrofolate + L-serine. It participates in one-carbon metabolism; tetrahydrofolate interconversion. It functions in the pathway amino-acid biosynthesis; glycine biosynthesis; glycine from L-serine: step 1/1. Functionally, catalyzes the reversible interconversion of serine and glycine with tetrahydrofolate (THF) serving as the one-carbon carrier. This reaction serves as the major source of one-carbon groups required for the biosynthesis of purines, thymidylate, methionine, and other important biomolecules. Also exhibits THF-independent aldolase activity toward beta-hydroxyamino acids, producing glycine and aldehydes, via a retro-aldol mechanism. The chain is Serine hydroxymethyltransferase from Xanthomonas campestris pv. campestris (strain 8004).